We begin with the raw amino-acid sequence, 362 residues long: D-alanine--D-alanine ligase (362 aa).

Residues 134 to 345 (KILAQRAGVP…YPDLITRLIR (212 aa)) enclose the ATP-grasp domain. ATP is bound at residue 170–225 (GQLGTSNLFVKPSNQGSSVGITHVTDDSNYAEALAEAFKYDDKVLVEEGIVGTEVE). The Mg(2+) site is built by aspartate 298, glutamate 312, and asparagine 314.

Belongs to the D-alanine--D-alanine ligase family. Mg(2+) is required as a cofactor. It depends on Mn(2+) as a cofactor.

It localises to the cytoplasm. It carries out the reaction 2 D-alanine + ATP = D-alanyl-D-alanine + ADP + phosphate + H(+). It participates in cell wall biogenesis; peptidoglycan biosynthesis. Its function is as follows. Cell wall formation. The protein is D-alanine--D-alanine ligase of Lactobacillus delbrueckii subsp. bulgaricus (strain ATCC 11842 / DSM 20081 / BCRC 10696 / JCM 1002 / NBRC 13953 / NCIMB 11778 / NCTC 12712 / WDCM 00102 / Lb 14).